Here is a 153-residue protein sequence, read N- to C-terminus: Histone H2B.6 (153 aa).

Basic and acidic residues-rich tracts occupy residues 1–28 and 36–53; these read MAPKAEKKPAAKKPAEEEPAAEKAEKAP and EKRLPAGKGEKGSGEGKK. The tract at residues 1–60 is disordered; it reads MAPKAEKKPAAKKPAEEEPAAEKAEKAPAGKKPKAEKRLPAGKGEKGSGEGKKAGRKKGK. N6-acetyllysine is present on residues Lys-7 and Lys-37. Residue Lys-149 forms a Glycyl lysine isopeptide (Lys-Gly) (interchain with G-Cter in ubiquitin) linkage.

This sequence belongs to the histone H2B family. The nucleosome is a histone octamer containing two molecules each of H2A, H2B, H3 and H4 assembled in one H3-H4 heterotetramer and two H2A-H2B heterodimers. The octamer wraps approximately 147 bp of DNA. Post-translationally, can be acetylated to form H2BK6ac and H2BK33ac. Monoubiquitinated by BRE1 to form H2BK143ub1 and deubiquitinated by UBP26. Required for heterochromatic histone H3 di- and trimethylation at H3K4me. May give a specific tag for epigenetic transcriptional activation.

The protein resides in the nucleus. The protein localises to the chromosome. Functionally, core component of nucleosome. Nucleosomes wrap and compact DNA into chromatin, limiting DNA accessibility to the cellular machineries which require DNA as a template. Histones thereby play a central role in transcription regulation, DNA repair, DNA replication and chromosomal stability. DNA accessibility is regulated via a complex set of post-translational modifications of histones, also called histone code, and nucleosome remodeling. The polypeptide is Histone H2B.6 (H2B.6) (Oryza sativa subsp. japonica (Rice)).